The sequence spans 678 residues: Glycine--tRNA ligase beta subunit (678 aa).

It belongs to the class-II aminoacyl-tRNA synthetase family. Tetramer of two alpha and two beta subunits.

The protein localises to the cytoplasm. The catalysed reaction is tRNA(Gly) + glycine + ATP = glycyl-tRNA(Gly) + AMP + diphosphate. This Streptococcus pneumoniae serotype 19F (strain G54) protein is Glycine--tRNA ligase beta subunit.